We begin with the raw amino-acid sequence, 60 residues long: Metallothionein B (60 aa).

Positions 1–28 are beta; that stretch reads MDPCDCSKSGTCNCGGSCTCTNCSCTTC. Residues cysteine 4, cysteine 6, cysteine 12, cysteine 14, cysteine 18, cysteine 20, cysteine 23, cysteine 25, cysteine 28, cysteine 32, cysteine 33, cysteine 35, cysteine 36, cysteine 40, cysteine 43, cysteine 47, cysteine 49, cysteine 54, cysteine 58, and cysteine 59 each contribute to the a divalent metal cation site. The interval 29-60 is alpha; sequence KKSCCPCCPSGCTKCASGCVCKGKTCDTSCCQ.

This sequence belongs to the metallothionein superfamily. Type 1 family.

In terms of biological role, metallothioneins have a high content of cysteine residues that bind various heavy metals. In Dicentrarchus labrax (European seabass), this protein is Metallothionein B (mtb).